Here is a 369-residue protein sequence, read N- to C-terminus: Probable serine/threonine-protein kinase FMP48 (369 aa).

One can recognise a Protein kinase domain in the interval 2–369; sequence YTKLRSIQSG…EKPCLIQDGK (368 aa). Residues 8–16 and Lys-31 contribute to the ATP site; that span reads IQSGTFSTV. Asp-133 (proton acceptor) is an active-site residue.

It belongs to the protein kinase superfamily. Ser/Thr protein kinase family.

It is found in the mitochondrion. The catalysed reaction is L-seryl-[protein] + ATP = O-phospho-L-seryl-[protein] + ADP + H(+). It catalyses the reaction L-threonyl-[protein] + ATP = O-phospho-L-threonyl-[protein] + ADP + H(+). This chain is Probable serine/threonine-protein kinase FMP48 (FMP48), found in Saccharomyces cerevisiae (strain ATCC 204508 / S288c) (Baker's yeast).